We begin with the raw amino-acid sequence, 841 residues long: Toll-like receptor 4 (841 aa).

A signal peptide spans Met-1 to Thr-23. Residues Glu-24–Lys-632 lie on the Extracellular side of the membrane. An intrachain disulfide couples Cys-29 to Cys-40. Asn-35 and Asn-73 each carry an N-linked (GlcNAc...) asparagine glycan. 7 LRR repeats span residues Ser-55–Ser-76, Glu-79–Gly-100, His-103–Gly-124, Ser-127–His-148, Asn-151–Ser-172, Asn-176–Val-197, and Asn-205–Glu-225. 4 N-linked (GlcNAc...) asparagine glycosylation sites follow: Asn-205, Asn-238, Asn-282, and Asn-309. Cys-281 and Cys-306 are oxidised to a cystine. LRR repeat units lie at residues Ser-352–Pro-373, Ser-374–Thr-394, Asn-400–Glu-422, Gln-423–Leu-444, Asn-448–Gly-469, Ser-472–Leu-495, Asn-497–Ser-518, Ser-521–Pro-542, and Ser-545–Pro-568. Cys-390 and Cys-391 form a disulfide bridge. 2 N-linked (GlcNAc...) asparagine glycosylation sites follow: Asn-497 and Asn-526. A glycan (N-linked (GlcNAc...) asparagine) is linked at Asn-575. The region spanning Asn-579 to Leu-630 is the LRRCT domain. 2 disulfide bridges follow: Cys-583/Cys-609 and Cys-585/Cys-628. Residue Asn-625 is glycosylated (N-linked (GlcNAc...) asparagine). Residues Thr-633 to Tyr-653 traverse the membrane as a helical segment. At Lys-654 to Thr-841 the chain is on the cytoplasmic side. The 144-residue stretch at Ser-673–Leu-816 folds into the TIR domain. The tract at residues Lys-820–Thr-841 is disordered. Polar residues predominate over residues Ala-830 to Thr-841.

Belongs to the Toll-like receptor family. Belongs to the lipopolysaccharide (LPS) receptor, a multi-protein complex containing at least CD14, LY96 and TLR4. Binding to bacterial LPS leads to homodimerization. Interacts with LY96 via the extracellular domain. Interacts with MYD88 and TIRAP via their respective TIR domains. Interacts with TICAM2. Interacts with NOX4. Interacts with CNPY3 and HSP90B1; this interaction is required for proper folding in the endoplasmic reticulum. Interacts with MAP3K21; this interaction leads to negative regulation of TLR4 signaling. Interacts with CD36, following CD36 stimulation by oxLDL or amyloid-beta 42, and forms a heterodimer with TLR6. The trimeric complex is internalized and triggers inflammatory response. LYN kinase activity facilitates TLR4-TLR6 heterodimerization and signal initiation. Interacts with TICAM1 in response to LPS in a WDFY1-dependent manner. Interacts with WDFY1 in response to LPS. Interacts with SMPDL3B. Interacts with CEACAM1; upon lipopolysaccharide stimulation, forms a complex including TLR4 and the phosphorylated form of SYK and CEACAM1, which in turn, recruits PTPN6 that dephosphorylates SYK, reducing the production of reactive oxygen species (ROS) and lysosome disruption, which in turn, reduces the activity of the inflammasome. Interacts with RFTN1; the interaction occurs in response to lipopolysaccharide stimulation. Interacts with SCIMP; the interaction occurs in response to lipopolysaccharide stimulation and is enhanced by phosphorylation of SCIMP by LYN. This interaction facilitates the phosphorylation of TLR4 by LYN which elicits a selective cytokine response in macrophages. Interacts with TRAF3IP3. Interacts with TREM1; this interaction enhances TLR4-mediated inflammatory response. Interacts with ZG16B/PAUF. Interacts with CD82; this interaction inhibits TLR4-mediated signaling pathway. Post-translationally, phosphorylated on tyrosine residues by LYN after binding lipopolysaccharide. In terms of processing, ubiquitinated by RNF128 via 'Lys-28'-linked polyubiquitin chains, leading to proteasomal degradation.

The protein localises to the cell membrane. The protein resides in the early endosome. It localises to the cell projection. It is found in the ruffle. Its function is as follows. Transmembrane receptor that functions as a pattern recognition receptor recognizing pathogen- and damage-associated molecular patterns (PAMPs and DAMPs) to induce innate immune responses via downstream signaling pathways. At the plasma membrane, cooperates with LY96 to mediate the innate immune response to bacterial lipopolysaccharide (LPS). Also involved in LPS-independent inflammatory responses triggered by free fatty acids, such as palmitate, and Ni(2+). Mechanistically, acts via MYD88, TIRAP and TRAF6, leading to NF-kappa-B activation, cytokine secretion and the inflammatory response. Alternatively, CD14-mediated TLR4 internalization via endocytosis is associated with the initiation of a MYD88-independent signaling via the TICAM1-TBK1-IRF3 axis leading to type I interferon production. In addition to the secretion of proinflammatory cytokines, initiates the activation of NLRP3 inflammasome and formation of a positive feedback loop between autophagy and NF-kappa-B signaling cascade. In complex with TLR6, promotes inflammation in monocytes/macrophages by associating with TLR6 and the receptor CD86. Upon ligand binding, such as oxLDL or amyloid-beta 42, the TLR4:TLR6 complex is internalized and triggers inflammatory response, leading to NF-kappa-B-dependent production of CXCL1, CXCL2 and CCL9 cytokines, via MYD88 signaling pathway, and CCL5 cytokine, via TICAM1 signaling pathway. In myeloid dendritic cells, vesicular stomatitis virus glycoprotein G but not LPS promotes the activation of IRF7, leading to type I IFN production in a CD14-dependent manner. The sequence is that of Toll-like receptor 4 (TLR4) from Bos taurus (Bovine).